The sequence spans 349 residues: Beta-glucanase (349 aa).

Residues Met-1–Ala-27 form the signal peptide. The GH16 domain occupies Lys-28 to Gly-197. Glu-79 functions as the Nucleophile in the catalytic mechanism. The Proton donor role is filled by Glu-83. The tract at residues Ser-258–Ile-311 is disordered. Positions Ala-270–Ala-307 are enriched in low complexity. 5 consecutive repeat copies span residues Pro-271–Ala-277, Pro-278–Val-284, Pro-285–Val-291, Pro-292–Ala-298, and Pro-301–Ala-307. The 5 X 7 AA tandem repeats of P-X-S-S-S-S-X stretch occupies residues Pro-271–Ala-307.

Belongs to the glycosyl hydrolase 16 family.

It catalyses the reaction Hydrolysis of (1-&gt;4)-beta-D-glucosidic linkages in beta-D-glucans containing (1-&gt;3)- and (1-&gt;4)-bonds.. This is Beta-glucanase from Fibrobacter succinogenes (strain ATCC 19169 / S85).